The primary structure comprises 159 residues: Small ribosomal subunit protein uS17x (159 aa).

It belongs to the universal ribosomal protein uS17 family.

Its subcellular location is the cytoplasm. This is Small ribosomal subunit protein uS17x (RPS11C) from Arabidopsis thaliana (Mouse-ear cress).